A 1011-amino-acid polypeptide reads, in one-letter code: MLPENLPTDPAAMTPAAVAAALRVDTKVGLSSNEVEERRQAFGINELPSEPPTPFWKLVLAQFEDTLVRILLLAATVSFAMAVVENNAADFVEPFIILLILILNATVGVWQENRAEGAIEALKSFVPKTAVVLRDGDIKTVNAEELVPGDVVEVAVGNRVPADMRVVELHSTTLRADQSILNGESVEAMKQIEAVKGRQERFPACMVYSGTAIVYGKALCVVVRTGASTEIGTIERDVREQEEVKTPLQVKLDEFGVLLSKVIGYICLVVFAVNLVRWYATHKPTKNETFFTRYIQPSVHCLKVAVALAVAAIPEGLPAVVTTCLALGTRRMAQHNALVRDLPSVETLGRCTVICSDKTGTLTTNMMSVLHAFTLKGDGSIKEYELKDSRFNIVSNSVTCEGRQVSSPLEQDGALTKLANIAVLCNDASLHHNAATVQVEKIGEATEAALLVMSEKFANIKGDSAVNAFRTLCEGKWKKNATLEFTRKRKSMSVHVTSTVTGSPASSTNNLFVKGAPEEVLRRSTHVMQDNGAVVQLSATHRKRIIEQLDKISGGANALRCIGFAFKPTKAVQHVRLNDPATFEDVESDLTFVGACGMLDPPREEVRDAIVKCRTAGIRVVVITGDRKETAEAICCKLGLLSSTADTTGLSYTGQELDAMTPAQKREAVLTAVLFSRTDPSHKMQLVQLLKDERLICAMTGDGVNDAPALKKADIGIAMGSGTEVAKSASKMVLADDNFATVVKAVQEGRAIYNNTKQFIRYLISSNIGEVVCILVTGLFGLPEALSPVQLLWVNLVTDGLPATALGFNAPDRDIMEQRPRRMEEPIVNGWLFMRYMVIGVYVGLATVGGFLWWFLRHGFSWHDLTTYTACSDMTNGTCLLLANPQTARAIALSILVVVEMLNALNALSENASLIVSRPSSNVWLLFAIFSSLSLHLIIMYVPFFAKLFNIVPLGVDPHVVQQAQPWSILTPTNFDDWKAVIVFSVPVIFLDELLKFITRRMEKAQEKKKD.

Topologically, residues 1–65 (MLPENLPTDP…WKLVLAQFED (65 aa)) are cytoplasmic. A helical transmembrane segment spans residues 66–84 (TLVRILLLAATVSFAMAVV). The Extracellular portion of the chain corresponds to 85–90 (ENNAAD). Residues 91–110 (FVEPFIILLILILNATVGVW) traverse the membrane as a helical segment. Over 111–258 (QENRAEGAIE…QVKLDEFGVL (148 aa)) the chain is Cytoplasmic. A helical transmembrane segment spans residues 259-278 (LSKVIGYICLVVFAVNLVRW). Residues 279–303 (YATHKPTKNETFFTRYIQPSVHCLK) lie on the Extracellular side of the membrane. The helical transmembrane segment at 304–321 (VAVALAVAAIPEGLPAVV) threads the bilayer. At 322 to 770 (TTCLALGTRR…RYLISSNIGE (449 aa)) the chain is on the cytoplasmic side. Aspartate 357 serves as the catalytic 4-aspartylphosphate intermediate. Position 514 (lysine 514) interacts with ATP. Residues 771–794 (VVCILVTGLFGLPEALSPVQLLWV) traverse the membrane as a helical segment. Topologically, residues 795 to 835 (NLVTDGLPATALGFNAPDRDIMEQRPRRMEEPIVNGWLFMR) are extracellular. The helical transmembrane segment at 836–856 (YMVIGVYVGLATVGGFLWWFL) threads the bilayer. Residues 857 to 885 (RHGFSWHDLTTYTACSDMTNGTCLLLANP) are Cytoplasmic-facing. The chain crosses the membrane as a helical span at residues 886–905 (QTARAIALSILVVVEMLNAL). Topologically, residues 906-922 (NALSENASLIVSRPSSN) are extracellular. The chain crosses the membrane as a helical span at residues 923 to 942 (VWLLFAIFSSLSLHLIIMYV). At 943-1011 (PFFAKLFNIV…MEKAQEKKKD (69 aa)) the chain is on the cytoplasmic side.

The protein belongs to the cation transport ATPase (P-type) (TC 3.A.3) family.

The protein localises to the flagellar pocket. Its subcellular location is the cell membrane. The catalysed reaction is Ca(2+)(in) + ATP + H2O = Ca(2+)(out) + ADP + phosphate + H(+). Its function is as follows. This magnesium-dependent enzyme catalyzes the hydrolysis of ATP coupled with the transport of the calcium. The polypeptide is Probable calcium-transporting ATPase (TBA1) (Trypanosoma brucei brucei).